The chain runs to 547 residues: Chaperonin GroEL (547 aa).

ATP contacts are provided by residues 30-33, K51, 87-91, G415, and D495; these read TLGP and DGTTT.

Belongs to the chaperonin (HSP60) family. In terms of assembly, forms a cylinder of 14 subunits composed of two heptameric rings stacked back-to-back. Interacts with the co-chaperonin GroES.

It localises to the cytoplasm. It carries out the reaction ATP + H2O + a folded polypeptide = ADP + phosphate + an unfolded polypeptide.. Together with its co-chaperonin GroES, plays an essential role in assisting protein folding. The GroEL-GroES system forms a nano-cage that allows encapsulation of the non-native substrate proteins and provides a physical environment optimized to promote and accelerate protein folding. This is Chaperonin GroEL from Shewanella pealeana (strain ATCC 700345 / ANG-SQ1).